A 545-amino-acid polypeptide reads, in one-letter code: CTP synthase (545 aa).

The tract at residues 1–266 (MKTNYIFVTG…DDYICKRFSL (266 aa)) is amidoligase domain. Serine 14 is a binding site for CTP. Serine 14 serves as a coordination point for UTP. ATP contacts are provided by residues 15–20 (SLGKGI) and aspartate 72. Positions 72 and 140 each coordinate Mg(2+). CTP contacts are provided by residues 147-149 (DIE), 187-192 (KTKPTQ), and lysine 223. Residues 187-192 (KTKPTQ) and lysine 223 each bind UTP. 239–241 (KDV) is an ATP binding site. In terms of domain architecture, Glutamine amidotransferase type-1 spans 291–542 (TIGMVGKYVE…VKAAGKYQKG (252 aa)). Glycine 352 serves as a coordination point for L-glutamine. Cysteine 379 serves as the catalytic Nucleophile; for glutamine hydrolysis. Residues 380–383 (LGMQ), glutamate 403, and arginine 470 contribute to the L-glutamine site. Catalysis depends on residues histidine 515 and glutamate 517.

Belongs to the CTP synthase family. As to quaternary structure, homotetramer.

The enzyme catalyses UTP + L-glutamine + ATP + H2O = CTP + L-glutamate + ADP + phosphate + 2 H(+). The catalysed reaction is L-glutamine + H2O = L-glutamate + NH4(+). It carries out the reaction UTP + NH4(+) + ATP = CTP + ADP + phosphate + 2 H(+). The protein operates within pyrimidine metabolism; CTP biosynthesis via de novo pathway; CTP from UDP: step 2/2. With respect to regulation, allosterically activated by GTP, when glutamine is the substrate; GTP has no effect on the reaction when ammonia is the substrate. The allosteric effector GTP functions by stabilizing the protein conformation that binds the tetrahedral intermediate(s) formed during glutamine hydrolysis. Inhibited by the product CTP, via allosteric rather than competitive inhibition. Functionally, catalyzes the ATP-dependent amination of UTP to CTP with either L-glutamine or ammonia as the source of nitrogen. Regulates intracellular CTP levels through interactions with the four ribonucleotide triphosphates. The chain is CTP synthase from Photorhabdus laumondii subsp. laumondii (strain DSM 15139 / CIP 105565 / TT01) (Photorhabdus luminescens subsp. laumondii).